A 757-amino-acid polypeptide reads, in one-letter code: MLERAALLHRLRLPAHSLPFIYNGALFGGAKRSFSATSKRCTYEEEKAVLDELKPQLTADDLKHSKLLRNIGVSAHIDSGKTTFTERVLYYTGRIKAIHEVRGRDSVGAKMDHMDLEREKGITIQSAATYCSWDKDQESYHFNLIDTPGHIDFTIEVERALRVLDGAVLVVCAVSGVQSQTVTVDRQMRRYNVPRVTFINKMDRMGADPFKAIQQINTKLRIPAAAVHVPIGSESDLCGVVDIINRVAIYNEGENGEVLRKGPVPEELQDLVEEKRLLLVETLADVDDEMAEIFLDEQEPTVQQIKDAIRRATIARKFTPVLMGSALANTGIQNVLDAIVDYLPEPSEVLNTALDVSNNETKVNLIPSSHHPFVGLAFKLEEGNYGQLTYIRVYQGKLKKGGYITNVRTGKKVKVSRLVRMHSNEMEDVNEIGAGEICATFGIDCSSGDTFTDGKLKYSMSSMYVPDAVISLSISPNSKDSATNFSKALNRFQKEDPTFRVRFDPESKQTIISGMGELHLEIYVERMRREYNVACTTGKPQVSYRESIQIPATFDYTHKKQSGGAGQYARVMGNLTPVANSSENTFTTAVVGGRIPDKYLAACAKGFEEVCEKGPLIGHKVLGINMLINDGAIHAVDSNELAFKTATTAAFVQSFMQAQPVVLEPIMTVTVTAPNEFQGNVITLLNKLQAVIQDTENGHDEFTMTSECSLNTMFGFATSLRASTQGKGEFSLEFKQYSPASPQLQKQLIEEYRKSKK.

Residues 1–41 (MLERAALLHRLRLPAHSLPFIYNGALFGGAKRSFSATSKRC) constitute a mitochondrion transit peptide. One can recognise a tr-type G domain in the interval 66–347 (KLLRNIGVSA…AIVDYLPEPS (282 aa)). Residues 75–82 (AHIDSGKT), 146–150 (DTPGH), and 200–203 (NKMD) contribute to the GTP site.

Belongs to the TRAFAC class translation factor GTPase superfamily. Classic translation factor GTPase family. EF-G/EF-2 subfamily.

It localises to the mitochondrion. It functions in the pathway protein biosynthesis; polypeptide chain elongation. In terms of biological role, mitochondrial GTPase that catalyzes the GTP-dependent ribosomal translocation step during translation elongation. During this step, the ribosome changes from the pre-translocational (PRE) to the post-translocational (POST) state as the newly formed A-site-bound peptidyl-tRNA and P-site-bound deacylated tRNA move to the P and E sites, respectively. Catalyzes the coordinated movement of the two tRNA molecules, the mRNA and conformational changes in the ribosome. This is Elongation factor G, mitochondrial from Eremothecium gossypii (strain ATCC 10895 / CBS 109.51 / FGSC 9923 / NRRL Y-1056) (Yeast).